The chain runs to 266 residues: MMSSAPETFSLDHLSQHQQQQPPPLAEQEQLCYVHCNFCDTILAVGVPCSSLFKTVTVRCGHCANLLSVNLRGLLLPAAASTANQLPFGQALLSPTSPHGLLDEVPSFQAPASLMTEQASPNVSSITSSNSSCANNAPATSMASAANKATQREPQQPKNAPSANRTSEKRQRVPSAYNRFIKDEIQRIKASNPDITHREAFSAAAKNWAHFPHIHFGLMPDQGLKKTGIQSQDGAGECMLFKDGLYAAAAAAAAATAASSMGVTPF.

The interval 1–22 is disordered; it reads MMSSAPETFSLDHLSQHQQQQP. A C4-type zinc finger spans residues 36–63; sequence CNFCDTILAVGVPCSSLFKTVTVRCGHC. A compositionally biased stretch (low complexity) spans 119-141; it reads ASPNVSSITSSNSSCANNAPATS. A disordered region spans residues 119-174; that stretch reads ASPNVSSITSSNSSCANNAPATSMASAANKATQREPQQPKNAPSANRTSEKRQRVP. The segment covering 142–165 has biased composition (polar residues); that stretch reads MASAANKATQREPQQPKNAPSANR.

It belongs to the YABBY family.

The protein resides in the nucleus. May be involved in leaf cell growth and differentiation, rather than abaxial cell fate determination. The chain is Protein YABBY 5 (YAB5) from Oryza sativa subsp. indica (Rice).